A 273-amino-acid chain; its full sequence is Urease accessory protein UreD (273 aa).

This sequence belongs to the UreD family. UreD, UreF and UreG form a complex that acts as a GTP-hydrolysis-dependent molecular chaperone, activating the urease apoprotein by helping to assemble the nickel containing metallocenter of UreC. The UreE protein probably delivers the nickel.

It is found in the cytoplasm. Its function is as follows. Required for maturation of urease via the functional incorporation of the urease nickel metallocenter. This chain is Urease accessory protein UreD, found in Rhizobium johnstonii (strain DSM 114642 / LMG 32736 / 3841) (Rhizobium leguminosarum bv. viciae).